A 360-amino-acid chain; its full sequence is Peptide chain release factor 1 (360 aa).

The residue at position 235 (Q235) is an N5-methylglutamine. Positions 284 to 293 (ARRQQEESST) are enriched in basic and acidic residues. The interval 284–314 (ARRQQEESSTRRNLLGSGDRSDRNRTYNFPQ) is disordered.

Belongs to the prokaryotic/mitochondrial release factor family. In terms of processing, methylated by PrmC. Methylation increases the termination efficiency of RF1.

The protein resides in the cytoplasm. In terms of biological role, peptide chain release factor 1 directs the termination of translation in response to the peptide chain termination codons UAG and UAA. This chain is Peptide chain release factor 1, found in Erwinia tasmaniensis (strain DSM 17950 / CFBP 7177 / CIP 109463 / NCPPB 4357 / Et1/99).